The sequence spans 81 residues: Conotoxin Im6.1 (81 aa).

Positions 1–20 (MSKLGVVLFTLLLLVPLVTP) are cleaved as a signal peptide. Residues 21-47 (ERDGGKWTMLAKNKKAMKRNLMDFITR) constitute a propeptide that is removed on maturation. 3 cysteine pairs are disulfide-bonded: Cys49/Cys61, Cys54/Cys67, and Cys60/Cys76.

It belongs to the conotoxin M superfamily. In terms of tissue distribution, expressed by the venom duct.

The protein resides in the secreted. This is Conotoxin Im6.1 from Conus imperialis (Imperial cone).